Reading from the N-terminus, the 108-residue chain is Peptidyl-prolyl cis-trans isomerase FKBP1B (108 aa).

In terms of domain architecture, PPIase FKBP-type spans 20 to 108; that stretch reads GQICVVHYTG…IFDVELLSLE (89 aa).

Belongs to the FKBP-type PPIase family. FKBP1 subfamily. As to quaternary structure, identified in a complex composed of RYR2, FKBP1B, PKA catalytic subunit, PRKAR2A, AKAP6, and the protein phosphatases PP2A and PP1. Interacts directly with RYR2.

Its subcellular location is the cytoplasm. The protein resides in the sarcoplasmic reticulum. The enzyme catalyses [protein]-peptidylproline (omega=180) = [protein]-peptidylproline (omega=0). With respect to regulation, inhibited by both FK506 and rapamycin. Functionally, has the potential to contribute to the immunosuppressive and toxic effects of FK506 and rapamycin. PPIases accelerate the folding of proteins. It catalyzes the cis-trans isomerization of proline imidic peptide bonds in oligopeptides. The protein is Peptidyl-prolyl cis-trans isomerase FKBP1B (Fkbp1b) of Mus musculus (Mouse).